The primary structure comprises 173 residues: Small ribosomal subunit protein uS11m (173 aa).

Belongs to the universal ribosomal protein uS11 family.

It localises to the mitochondrion. This is Small ribosomal subunit protein uS11m (RPS11) from Acanthamoeba castellanii (Amoeba).